Here is a 450-residue protein sequence, read N- to C-terminus: Caspase Dronc (450 aa).

Positions 1-134 (MQPPELEIGM…RTSRKSADIV (134 aa)) are excised as a propeptide. The CARD domain occupies 64–109 (EKDVRVEQHRRLLLKITQRGPTAYNLLINALRNINCLDAAVLLESV). The required for binding Diap1 stretch occupies residues 114–125 (SRPPFISLNERR). Catalysis depends on residues histidine 271 and cysteine 318. The propeptide occupies 321–324 (DEYD).

It belongs to the peptidase C14A family. As to quaternary structure, interacts (via residues 114-125) with Diap1 (via BIR 2 domain); binding blocks Dronc-mediated cell death. Can form a stable complex with Drice. Rpr, hid and grim can out-compete Dronc for binding Diap1, therefore removing Diap1-mediated ubiquitination. Interacts (via CARD domain) with Dark (via Dark CARD and WD domains); the interaction stimulates Dark oligomerization to form the apoptosome and brings pairs of Dronc molecules together on the apoptosome to facilitate their dimerization and activation by autocatalytic cleavage. Binding to Dark stimulates apoptosome assembly. After autocatalytic cleavage the Dronc caspase domain dissociates from the apoptosome but the CARD domain remains associated. Ubiquitinated by Diap1, leading to its subsequent degradation. In terms of tissue distribution, ubiquitously expressed in embryos during early stages of development. In late third instar larvae, dramatic up-regulation in salivary glands and midgut before histolysis of these tissues.

Its subcellular location is the cytoplasm. The catalysed reaction is Strict requirement for an Asp residue at position P1 and with a marked preference for His at position P2. It has a preferred cleavage sequence of Leu-Gly-His-Asp-|-Xaa.. Its activity is regulated as follows. Zymogen activated by autocatalytic cleavage; association with the Dark apoptosome brings multiple molecules together to facilitate their dimerization and activation by autocatalytic cleavage. Functionally, involved in the activation cascade of caspases responsible for apoptosis execution. Effector of steroid-mediated apoptosis during insect metamorphosis. Overexpression promotes programmed cell death. Interaction with Diap1 is required to suppress Dronc-mediated cell death; via Diap1-mediated ubiquitination of Dronc. Rate-limiting caspase in rpr, grim and hid death pathway. Recruited to the Dark apoptosome, an adapter protein complex that mediates activation of the caspase cascade in programmed cell death initiated by the intrinsic apoptosis pathway. Association with the Dark apoptosome stimulates autocatalytic cleavage and activation of Dronc, promoting Dronc-mediated cleavage of downstream effector caspases such as Drice. This is Caspase Dronc from Drosophila melanogaster (Fruit fly).